Consider the following 299-residue polypeptide: MEHFDASLSTYFRAWLGPRDTRVEGWFLLDNYVPTLVCSILYLLIVWLGPKYMKTRQPFSCRGILVVYNLGLTLLSLYMFCELVTGVWEGQYNFFCQGTRSGGEADMKIIRVLWWYYFSKLIEFMDTFFFILRKNNHQITVLHVYHHASMLNIWWFVMNWVPCGHSYFGATLNSFIHVLMYSYYGLSSIPSMRPYLWWKKYITQGQLLQFVLTIIQTSCGVIWPCTFPLGWLYFQIGYMISLITLFTNFYIQTYNKKGVSRRREHQKDHQNGSVAAVNGHISSFSSLENNVKPRKQRKD.

Methionine 1 is modified (N-acetylmethionine). 7 helical membrane passes run 26 to 46, 64 to 84, 112 to 132, 139 to 158, 168 to 187, 205 to 225, and 226 to 246; these read WFLL…LLIV, ILVV…CELV, VLWW…FFIL, ITVL…WFVM, FGAT…YGLS, GQLL…IWPC, and TFPL…ITLF. Serine 285 bears the Phosphoserine mark.

The protein belongs to the ELO family. ELOVL5 subfamily. In terms of assembly, interacts with TECR.

The protein resides in the endoplasmic reticulum membrane. Its subcellular location is the cell projection. The protein localises to the dendrite. It carries out the reaction a very-long-chain acyl-CoA + malonyl-CoA + H(+) = a very-long-chain 3-oxoacyl-CoA + CO2 + CoA. It catalyses the reaction (6Z,9Z,12Z)-octadecatrienoyl-CoA + malonyl-CoA + H(+) = (8Z,11Z,14Z)-3-oxoeicosatrienoyl-CoA + CO2 + CoA. The enzyme catalyses (9Z,12Z,15Z)-octadecatrienoyl-CoA + malonyl-CoA + H(+) = (11Z,14Z,17Z)-3-oxoeicosatrienoyl-CoA + CO2 + CoA. The catalysed reaction is (9Z)-hexadecenoyl-CoA + malonyl-CoA + H(+) = 3-oxo-(11Z)-octadecenoyl-CoA + CO2 + CoA. It carries out the reaction (9Z)-octadecenoyl-CoA + malonyl-CoA + H(+) = 3-oxo-(11Z)-eicosenoyl-CoA + CO2 + CoA. It catalyses the reaction (11Z)-octadecenoyl-CoA + malonyl-CoA + H(+) = 3-oxo-(13Z)-eicosenoyl-CoA + CO2 + CoA. The enzyme catalyses (9Z,12Z)-octadecadienoyl-CoA + malonyl-CoA + H(+) = (11Z,14Z)-3-oxoicosa-11,14-dienoyl-CoA + CO2 + CoA. The catalysed reaction is (6Z,9Z,12Z,15Z)-octadecatetraenoyl-CoA + malonyl-CoA + H(+) = (8Z,11Z,14Z,17Z)-3-oxoicosatetraenoyl-CoA + CO2 + CoA. It carries out the reaction (5Z,8Z,11Z,14Z)-eicosatetraenoyl-CoA + malonyl-CoA + H(+) = (7Z,10Z,13Z,16Z)-3-oxodocosatetraenoyl-CoA + CO2 + CoA. It catalyses the reaction (5Z,8Z,11Z,14Z,17Z)-eicosapentaenoyl-CoA + malonyl-CoA + H(+) = 3-oxo-(7Z,10Z,13Z,16Z,19Z)-docosapentaenoyl-CoA + CO2 + CoA. The protein operates within lipid metabolism; polyunsaturated fatty acid biosynthesis. Functionally, catalyzes the first and rate-limiting reaction of the four reactions that constitute the long-chain fatty acids elongation cycle. This endoplasmic reticulum-bound enzymatic process allows the addition of 2 carbons to the chain of long- and very long-chain fatty acids (VLCFAs) per cycle. Condensing enzyme that acts specifically toward polyunsaturated acyl-CoA with the higher activity toward C18:3(n-6) acyl-CoA. May participate in the production of monounsaturated and of polyunsaturated VLCFAs of different chain lengths that are involved in multiple biological processes as precursors of membrane lipids and lipid mediators. In conditions where the essential linoleic and alpha linoleic fatty acids are lacking it is also involved in the synthesis of Mead acid from oleic acid. The polypeptide is Very long chain fatty acid elongase 5 (Bos taurus (Bovine)).